The sequence spans 177 residues: Large ribosomal subunit protein uL6 (177 aa).

Belongs to the universal ribosomal protein uL6 family. As to quaternary structure, part of the 50S ribosomal subunit.

Functionally, this protein binds to the 23S rRNA, and is important in its secondary structure. It is located near the subunit interface in the base of the L7/L12 stalk, and near the tRNA binding site of the peptidyltransferase center. In Acinetobacter baylyi (strain ATCC 33305 / BD413 / ADP1), this protein is Large ribosomal subunit protein uL6.